Consider the following 365-residue polypeptide: Chorismate synthase (365 aa).

NADP(+) is bound by residues arginine 48 and arginine 54. FMN-binding positions include 129–131 (RSS), 241–242 (NA), glycine 285, 300–304 (KPTSS), and arginine 326.

This sequence belongs to the chorismate synthase family. Homotetramer. The cofactor is FMNH2.

The catalysed reaction is 5-O-(1-carboxyvinyl)-3-phosphoshikimate = chorismate + phosphate. It functions in the pathway metabolic intermediate biosynthesis; chorismate biosynthesis; chorismate from D-erythrose 4-phosphate and phosphoenolpyruvate: step 7/7. Functionally, catalyzes the anti-1,4-elimination of the C-3 phosphate and the C-6 proR hydrogen from 5-enolpyruvylshikimate-3-phosphate (EPSP) to yield chorismate, which is the branch point compound that serves as the starting substrate for the three terminal pathways of aromatic amino acid biosynthesis. This reaction introduces a second double bond into the aromatic ring system. The protein is Chorismate synthase of Parvibaculum lavamentivorans (strain DS-1 / DSM 13023 / NCIMB 13966).